The primary structure comprises 1400 residues: DNA-directed RNA polymerase subunit beta' (1400 aa).

4 residues coordinate Zn(2+): cysteine 70, cysteine 72, cysteine 85, and cysteine 88. Mg(2+) is bound by residues aspartate 460, aspartate 462, and aspartate 464. Positions 814, 889, 896, and 899 each coordinate Zn(2+).

It belongs to the RNA polymerase beta' chain family. As to quaternary structure, the RNAP catalytic core consists of 2 alpha, 1 beta, 1 beta' and 1 omega subunit. When a sigma factor is associated with the core the holoenzyme is formed, which can initiate transcription. Mg(2+) is required as a cofactor. Zn(2+) serves as cofactor.

The enzyme catalyses RNA(n) + a ribonucleoside 5'-triphosphate = RNA(n+1) + diphosphate. In terms of biological role, DNA-dependent RNA polymerase catalyzes the transcription of DNA into RNA using the four ribonucleoside triphosphates as substrates. This chain is DNA-directed RNA polymerase subunit beta', found in Alcanivorax borkumensis (strain ATCC 700651 / DSM 11573 / NCIMB 13689 / SK2).